A 129-amino-acid chain; its full sequence is C-phycocyanin beta subunit (129 aa).

An N4-methylasparagine modification is found at Asn62. (2R,3E)-phycocyanobilin is bound at residue Cys116.

This sequence belongs to the phycobiliprotein family. Heterodimer of an alpha and a beta subunit, which further assembles into trimers and the trimers into hexamers. Two isomers exist. In terms of processing, contains two covalently linked bilin chromophores.

Its subcellular location is the cellular thylakoid membrane. Functionally, light-harvesting photosynthetic bile pigment-protein from the phycobiliprotein complex (phycobilisome, PBS). Phycocyanin is the major phycobiliprotein in the PBS rod. The sequence is that of C-phycocyanin beta subunit from Aphanizomenon flos-aquae.